Reading from the N-terminus, the 137-residue chain is uncharacterized protein (137 aa).

A compositionally biased stretch (low complexity) spans 1–10; that stretch reads MISVDVPGHP. Residues 1 to 23 are disordered; the sequence is MISVDVPGHPGDAGGGGGGARKV. Residues 11–20 are compositionally biased toward gly residues; sequence GDAGGGGGGA.

This is an uncharacterized protein from Human adenovirus C serotype 2 (HAdV-2).